Consider the following 313-residue polypeptide: Bifunctional pinoresinol-lariciresinol reductase 1 (313 aa).

NADP(+) is bound by residues 11–17 (GGTGYIG), Arg-36, and Lys-45. Catalysis depends on Lys-138, which acts as the Proton acceptor. Arg-142 contacts NADP(+). His-271 lines the substrate pocket.

It belongs to the NmrA-type oxidoreductase family. Isoflavone reductase subfamily. Dimer.

The enzyme catalyses (+)-lariciresinol + NADP(+) = (+)-pinoresinol + NADPH + H(+). It catalyses the reaction (-)-lariciresinol + NADP(+) = (-)-pinoresinol + NADPH + H(+). The catalysed reaction is (+)-secoisolariciresinol + NADP(+) = (-)-lariciresinol + NADPH + H(+). Reductase involved in lignan biosynthesis. Catalyzes the enantioselective sequential conversion of (-)-pinoresinol into (-)-lariciresinol and of (-)-lariciresinol into (+)-secoisolariciresinol. Can also convert with a lower efficiency (+)-pinoresinol into (+)-lariciresinol, but not (+)-lariciresinol into (-)-secoisolariciresinol. Abstracts the 4R-hydride from the NADPH cofactor during catalysis. The polypeptide is Bifunctional pinoresinol-lariciresinol reductase 1 (PLR_Tp1) (Thuja plicata (Western red-cedar)).